The following is a 562-amino-acid chain: MSGEKKAKGWRFYGLVGFGAIALLSAGVWALQYAGSGPEKTLSPLVVHNNLQIDLNEPDLFLDSDSLSQLPKDLLTIPFLHDVLSEDFVFYYQNHADRLGIEGSIRRIVYEHDLTLKDKLFSSLLDQPAQAALWHDKQGHLSHYMVLIQRSGLSKLLEPLLFAATSDSQLSKTEISSIKINSETVPVYQLRYNGNNALMFATYQDKMLVFSSTDMLFKDDQQDTEATAIAGDLLSGKKRWQASFGLEERTAEKTPVRQRIVVSARWLGFGYQRLMPSFAGVRFEMGNDGWHSFVALNDESASVDASFDFTPVWNSMPAGASFCVAVPYSHGIAEEMLSHISQENDKLNGALDGAAGLCWYEDSKLQTPLFVGQFDGTAEQAQLPGKLFTQNIGAHESKAPEGVLPVSQTQQGEAQIWRREVSSRYGQYPKAQAAQPDQLMSDYFFRVSLAMQNKTLLFSLDDTLVNNALQTLNKTRPAMVDVIPTDGIVPLYINPQGIAKLLRNETLTSLPKNLEPVFYNAAQTLLMPKLDALSQQPRYVMKLAQMEPGAAWQWLPITWQPL.

This is an uncharacterized protein from Escherichia coli (strain K12).